The chain runs to 496 residues: Nitric oxide synthase, inducible (496 aa).

Residues Cys6, Glu32, and Gln36 each contribute to the FMN site. Residues 101-341 (KNLFTMRLRS…VRSVSGFQLP (241 aa)) form the FAD-binding FR-type domain. An NADP(+)-binding site is contributed by Arg121. FAD-binding residues include His143, Arg277, Tyr279, Ser280, Thr295, and Ala297. Thr300 contributes to the NADP(+) binding site. Residues Tyr301, Val314, Cys315, and Ser316 each contribute to the FAD site. Residues Thr355, Arg388, Ser417, Arg418, Lys424, Tyr426, Gln428, and Asp461 each coordinate NADP(+).

Belongs to the NOS family. In terms of assembly, homodimer. Interacts with NHERF1. Interacts with GAPDH; induced by oxidatively-modified low-densitity lipoprotein (LDL(ox)). Interacts with S100A8 and S100A9 to form the iNOS-S100A8/9 transnitrosylase complex. Interacts with SPSB1, SPSB2 and SPSB4. Interacts with ELOC and CUL5 in the presence of SPSB1 or SPSB2 or SPSB4. Forms a complex with ASL, ASS1 and HSP90AA1; the complex regulates cell-autonomous L-arginine synthesis and citrulline recycling while channeling extracellular L-arginine to nitric oxide synthesis pathway. Heme b serves as cofactor. It depends on FAD as a cofactor. FMN is required as a cofactor. Requires (6R)-L-erythro-5,6,7,8-tetrahydrobiopterin as cofactor. In terms of processing, polyubiquitinated; mediated by SPSB1, SPSB2 and SPSB4, leading to proteasomal degradation.

It localises to the cytoplasm. The protein resides in the cytosol. It catalyses the reaction 2 L-arginine + 3 NADPH + 4 O2 + H(+) = 2 L-citrulline + 2 nitric oxide + 3 NADP(+) + 4 H2O. Not stimulated by calcium/calmodulin. Produces nitric oxide (NO) which is a messenger molecule with diverse functions throughout the body. In macrophages, NO mediates tumoricidal and bactericidal actions. Also has nitrosylase activity and mediates cysteine S-nitrosylation of cytoplasmic target proteins such PTGS2/COX2. As component of the iNOS-S100A8/9 transnitrosylase complex involved in the selective inflammatory stimulus-dependent S-nitrosylation of GAPDH implicated in regulation of the GAIT complex activity and probably multiple targets including ANXA5, EZR, MSN and VIM. Involved in inflammation, enhances the synthesis of pro-inflammatory mediators such as IL6 and IL8. The polypeptide is Nitric oxide synthase, inducible (NOS2) (Oryctolagus cuniculus (Rabbit)).